The following is a 306-amino-acid chain: Leucine-rich repeat-containing protein 59 (306 aa).

Met-1 is modified (N-acetylmethionine). Residue Thr-2 is modified to N-acetylthreonine; in Leucine-rich repeat-containing protein 59, N-terminally processed. The Cytoplasmic segment spans residues 2 to 244 (TKAGSKGGNL…KPPPRKHTRS (243 aa)). LRR repeat units follow at residues 10–31 (NLRDKLDGNELDLSLSDLNEVP), 40–62 (KATVLDLSCNKLTTLPSDFCGLT), 63–84 (HLVKLDLSKNKLRQLPADFGRL), 86–107 (NLQHLDLLNNRLVTLPVSFAQL), and 109–128 (SLKWLDLKDNPLDPVLAKVA). Residues Ser-23 and Ser-25 each carry the phosphoserine modification. At Lys-73 the chain carries N6-succinyllysine. Lys-135 is modified (N6-acetyllysine). A coiled-coil region spans residues 152–216 (QADQERERQR…KAAKREQEKK (65 aa)). The span at 175 to 221 (AKQRAKEAQERELRKREKAEEKERRRKEYDALKAAKREQEKKPKKET) shows a compositional bias: basic and acidic residues. The interval 175 to 241 (AKQRAKEAQE…RPRKPPPRKH (67 aa)) is disordered. The span at 229 to 241 (SSSRPRKPPPRKH) shows a compositional bias: basic residues. Residues 245–265 (WAVLKLLLLLLLCVAGGLVAC) traverse the membrane as a helical segment. Residues 266–306 (RVTELQQQPLCTSVNTIYDNAVRGLRSHDILQWVLQTDSQQ) lie on the Lumenal side of the membrane.

Can form homodimers. Interacts with SGO1. Interacts with FGF1.

It is found in the microsome membrane. The protein resides in the endoplasmic reticulum membrane. It localises to the nucleus envelope. Required for nuclear import of FGF1, but not that of FGF2. Might regulate nuclear import of exogenous FGF1 by facilitating interaction with the nuclear import machinery and by transporting cytosolic FGF1 to, and possibly through, the nuclear pores. The protein is Leucine-rich repeat-containing protein 59 (LRRC59) of Bos taurus (Bovine).